The chain runs to 295 residues: Phosphate transport system permease protein PstA (295 aa).

6 helical membrane-spanning segments follow: residues 29–49, 88–108, 126–146, 149–169, 198–218, and 266–286; these read IALV…IWIL, LLIL…GIYL, DILL…IVVA, EHFS…PIVI, ISAI…LLAI, and NLAW…NILA. The ABC transmembrane type-1 domain occupies 83-286; it reads IAGSGLLILW…LCVLLLNILA (204 aa).

Belongs to the binding-protein-dependent transport system permease family. CysTW subfamily.

The protein localises to the cell inner membrane. Its function is as follows. Part of a binding-protein-dependent transport system for phosphate; probably responsible for the translocation of the substrate across the membrane. In Yersinia pestis, this protein is Phosphate transport system permease protein PstA (pstA).